The following is a 994-amino-acid chain: Chloride channel protein 1 (994 aa).

At 1-118 the chain is on the cytoplasmic side; the sequence is MERSQSQRHG…VLRRKLGEDW (118 aa). A helical transmembrane segment spans residues 119 to 150; the sequence is IFLVLLGLLMALVSWCMDYVSAKSLQAYKWTY. At 151–158 the chain is on the extracellular side; it reads AQMKPSLP. A helical membrane pass occupies residues 159–179; that stretch reads LQYLAWVTFPLILILFSALFC. The Cytoplasmic segment spans residues 180–183; that stretch reads QLIS. Residues 184–189 constitute an intramembrane region (note=Loop between two helices); the sequence is PQAVGS. The Selectivity filter part_1 signature appears at 188–192; it reads GSGIP. Residue S189 coordinates chloride. The helical intramembrane region spans 190 to 195; it reads GIPEMK. The Cytoplasmic portion of the chain corresponds to 196 to 208; the sequence is TILRGVVLKEYLT. Positions 209 to 224 form an intramembrane region, helical; that stretch reads LKAFVAKVVALTAGLG. Residues 225-230 constitute an intramembrane region (note=Loop between two helices); it reads SGIPVG. A Selectivity filter part_2 motif is present at residues 230 to 234; that stretch reads GKEGP. The helical intramembrane region spans 231–246; that stretch reads KEGPFVHIASICAAVL. The Cytoplasmic segment spans residues 247–268; the sequence is SKFMSMFSGVYEQPYYYTDILT. 2 intramembrane regions (helical) span residues 269–280 and 281–290; these read VGCAVGVGCCFG and TPLGGVLFSI. The Cytoplasmic segment spans residues 291–301; it reads EVTSTYFAVRN. A helical membrane pass occupies residues 302–321; sequence YWRGFFAATFSAFVFRVLAV. Topologically, residues 322–347 are extracellular; sequence WNKDAVTITALFRTNFRMDFPFDLKE. A helical membrane pass occupies residues 348–376; sequence LPAFAVIGICCGFLGAVFVYLHRQVMLGV. Residues 377-390 are Cytoplasmic-facing; that stretch reads RKHKCLSQFLAKHR. A helical membrane pass occupies residues 391-408; that stretch reads LLYPGIVTFVIASLTFPP. The Extracellular segment spans residues 409–414; that stretch reads GMGQFM. Positions 415–418 form an intramembrane region, note=Loop between two helices; it reads AGEL. An intramembrane region (helical) is located at residues 419–426; the sequence is MPREAIST. The Extracellular segment spans residues 427-457; it reads LFDNNTWVKHIGDPQSLGQSAVWLHPQVNVI. The segment at residues 458 to 475 is an intramembrane region (helical); sequence IIILLFFVMKFWMSIVAT. The note=Loop between two helices intramembrane region spans 476–482; it reads TMPIPCG. Residues 482–486 carry the Selectivity filter part_3 motif; it reads GGFMP. Positions 483 to 498 form an intramembrane region, helical; that stretch reads GFMPVFVLGAAFGRLV. Chloride is bound at residue F484. The Extracellular segment spans residues 499-521; it reads GEIMAMLFPEGILFDDIIYKILP. The helical intramembrane region spans 522–538; it reads GGYAVIGAAALTGAVSH. The segment at residues 539–540 is an intramembrane region (note=Loop between two helices); that stretch reads TV. The helical intramembrane region spans 541-554; sequence STAVICFELTGQIA. The Extracellular segment spans residues 555-557; sequence HIL. Positions 558 to 571 form an intramembrane region, helical; the sequence is PMMVAVILANMVAQ. The note=Loop between two helices intramembrane region spans 572-575; sequence SLQP. The segment at residues 576–578 is an intramembrane region (helical); the sequence is SLY. Y578 is a binding site for chloride. Topologically, residues 579–994 are cytoplasmic; that stretch reads DSIIQVKKLP…DEEDEDELIL (416 aa). The region spanning 609–668 is the CBS 1 domain; the sequence is MVRDVKFVSASCTYGELRNLLQATTVKTLPLVDSKDSMILLGSVERSELQSLLQRHLCAE. A disordered region spans residues 710–770; it reads EDEDEDLSRK…PEASDSADQR (61 aa). Residues 725 to 739 show a composition bias toward pro residues; that stretch reads TPAPPPPSPPPPPSQ. In terms of domain architecture, CBS 2 spans 827-882; it reads IDQSPFQLVEQTTLHKTHTLFSLLGLHLAYVTSMGKLRGVLALEELQKAIEGHTKS. Disordered stretches follow at residues 886 to 954 and 971 to 994; these read LRPP…ARAE and ELAD…ELIL. S892 carries the phosphoserine modification. A compositionally biased stretch (pro residues) spans 933–943; that stretch reads PETPVPPPSPE. The span at 985-994 shows a compositional bias: acidic residues; the sequence is DEEDEDELIL.

It belongs to the chloride channel (TC 2.A.49) family. ClC-1/CLCN1 subfamily. As to quaternary structure, homodimer. As to expression, predominantly expressed in skeletal muscles.

It is found in the cell membrane. The protein resides in the sarcolemma. The protein localises to the T-tubule. The enzyme catalyses chloride(in) = chloride(out). It catalyses the reaction thiocyanate(in) = thiocyanate(out). The catalysed reaction is bromide(in) = bromide(out). It carries out the reaction nitrate(in) = nitrate(out). The enzyme catalyses iodide(out) = iodide(in). Its activity is regulated as follows. Modulated by membrane voltage with depolarization favouring channel opening and hyperpolarization favouring channel closure. Inhibited by acidic pH and ATP binding due to a shift of voltage dependence of common gating to more positive voltages. Inhibited by 9-anthracene-carboxylic. In terms of biological role, voltage-gated chloride channel involved in skeletal muscle excitability. Generates most of the plasma membrane chloride conductance in skeletal muscle fibers, stabilizes the resting membrane potential and contributes to the repolarization phase during action potential firing. Forms a homodimeric channel where each subunit has its own ion conduction pathway. Conducts double-barreled currents controlled by two types of gates, two fast glutamate gates that control each subunit independently and a slow common gate that opens and shuts off both subunits simultaneously. Has a significant open probability at muscle resting potential and is further activated upon membrane depolarization. Permeable to small monovalent anions with ion selectivity for chloride &gt; thiocyanate &gt; bromide &gt; nitrate &gt; iodide. This is Chloride channel protein 1 (Clcn1) from Mus musculus (Mouse).